Here is a 383-residue protein sequence, read N- to C-terminus: MKLIRKDIEKDNAGQVTLIPEEAEDMWHTYNLLHVGDSLQASTIRKVQTESSTGSVGSNRVRTTLTICVETIDFDSQACQLRVKGINIQENQYVKMGAYHTIELEPNRKFTLAKKQWDSIVLERIEQACDPAFSADVAAVVMQEGLAHICLVTPSMTLLRAKIETSIPRKRRGNCTQHEKALEKFYEQVMQGILRHINFDVVKVVLVASPGFVREQFCEFLFLRAVKQDLKILLENRGKFLQVHSSSGRKYSLTEVLCDPAVTARLSDTKAACEIKALGDFYKMLQHEPDRAFYGIKQVEKANEALAVDTLLVTDELFRHQDVPTRTRYVRLVDSVKDNGGTVRIFSSLHVSGEQLNQLTGVAAILRFPVADLSDEESSSDED.

This sequence belongs to the eukaryotic release factor 1 family. Pelota subfamily. Component of the Pelota-HBS1L complex, also named Dom34-Hbs1 complex, composed of PELO and HBS1L. It depends on a divalent metal cation as a cofactor.

It is found in the cytoplasm. Its function is as follows. Component of the Pelota-HBS1L complex, a complex that recognizes stalled ribosomes and triggers the No-Go Decay (NGD) pathway. In the Pelota-HBS1L complex, PELO recognizes ribosomes stalled at the 3' end of an mRNA and engages stalled ribosomes by destabilizing mRNA in the mRNA channel. Following mRNA extraction from stalled ribosomes by the SKI complex, the Pelota-HBS1L complex promotes recruitment of ABCE1, which drives the disassembly of stalled ribosomes, followed by degradation of damaged mRNAs as part of the NGD pathway. The chain is Protein pelota homolog (pelo) from Xenopus laevis (African clawed frog).